Consider the following 313-residue polypeptide: D-alanine--D-alanine ligase (313 aa).

The ATP-grasp domain occupies 104–304 (KQALVPHGIP…YSDLVEAIIA (201 aa)). 130 to 187 (PLPRPYVLKPVNEGSSVGVAIVTAEGNYGSPISAASKGPWQEFDQLLAEPFIRGRELT) serves as a coordination point for ATP. Asp-255, Glu-271, and Asn-273 together coordinate Mg(2+).

Belongs to the D-alanine--D-alanine ligase family. It depends on Mg(2+) as a cofactor. Mn(2+) is required as a cofactor.

Its subcellular location is the cytoplasm. The catalysed reaction is 2 D-alanine + ATP = D-alanyl-D-alanine + ADP + phosphate + H(+). It functions in the pathway cell wall biogenesis; peptidoglycan biosynthesis. Functionally, cell wall formation. In Novosphingobium aromaticivorans (strain ATCC 700278 / DSM 12444 / CCUG 56034 / CIP 105152 / NBRC 16084 / F199), this protein is D-alanine--D-alanine ligase.